The following is a 257-amino-acid chain: Pyridoxine 5'-phosphate synthase (257 aa).

Asparagine 6 contacts 3-amino-2-oxopropyl phosphate. 8-9 contacts 1-deoxy-D-xylulose 5-phosphate; sequence DH. A 3-amino-2-oxopropyl phosphate-binding site is contributed by arginine 17. The Proton acceptor role is filled by histidine 41. Residues arginine 43 and histidine 48 each coordinate 1-deoxy-D-xylulose 5-phosphate. Glutamate 68 functions as the Proton acceptor in the catalytic mechanism. Threonine 98 provides a ligand contact to 1-deoxy-D-xylulose 5-phosphate. Histidine 210 serves as the catalytic Proton donor. 3-amino-2-oxopropyl phosphate-binding positions include glycine 211 and 232–233; that span reads GQ.

The protein belongs to the PNP synthase family. As to quaternary structure, homooctamer; tetramer of dimers.

The protein localises to the cytoplasm. It catalyses the reaction 3-amino-2-oxopropyl phosphate + 1-deoxy-D-xylulose 5-phosphate = pyridoxine 5'-phosphate + phosphate + 2 H2O + H(+). It functions in the pathway cofactor biosynthesis; pyridoxine 5'-phosphate biosynthesis; pyridoxine 5'-phosphate from D-erythrose 4-phosphate: step 5/5. Catalyzes the complicated ring closure reaction between the two acyclic compounds 1-deoxy-D-xylulose-5-phosphate (DXP) and 3-amino-2-oxopropyl phosphate (1-amino-acetone-3-phosphate or AAP) to form pyridoxine 5'-phosphate (PNP) and inorganic phosphate. The protein is Pyridoxine 5'-phosphate synthase of Campylobacter jejuni (strain RM1221).